Reading from the N-terminus, the 361-residue chain is Probable lipid desaturase ADS3.2, chloroplastic (361 aa).

The N-terminal 57 residues, 1 to 57, are a transit peptide targeting the chloroplast; that stretch reads MMSLSTTLKPLSHFSPFVKRHNPKTNNTLFTLDTHNFTNSFWSKRGGSVSHRKHTVV. Transmembrane regions (helical) follow at residues 99–118 and 122–139; these read LVIF…YFSW and WVFP…TLSY. A Histidine box-1 motif is present at residues 140–145; that stretch reads HRNLSH. The Histidine box-2 signature appears at 177–181; that stretch reads HRYHH. Residues 246 to 266 traverse the membrane as a helical segment; the sequence is FLFYFCGGMPLLVWGIGITIA. The short motif at 309–313 is the Histidine box-3 element; that stretch reads HNNHH.

It belongs to the fatty acid desaturase type 1 family. The cofactor is Fe(2+).

Its subcellular location is the plastid. The protein resides in the chloroplast membrane. It functions in the pathway lipid metabolism; polyunsaturated fatty acid biosynthesis. This chain is Probable lipid desaturase ADS3.2, chloroplastic, found in Arabidopsis thaliana (Mouse-ear cress).